Reading from the N-terminus, the 469-residue chain is Glutamate--tRNA ligase (469 aa).

Residues 11–21 (PSPTGFIHLGN) carry the 'HIGH' region motif. Basic and acidic residues predominate over residues 114 to 131 (QREAGEKPRYDGTWRPEP). A disordered region spans residues 114 to 139 (QREAGEKPRYDGTWRPEPGKVLPEPP). The short motif at 243–247 (KMSKR) is the 'KMSKS' region element. Lysine 246 contributes to the ATP binding site.

Belongs to the class-I aminoacyl-tRNA synthetase family. Glutamate--tRNA ligase type 1 subfamily. In terms of assembly, monomer.

The protein localises to the cytoplasm. The catalysed reaction is tRNA(Glu) + L-glutamate + ATP = L-glutamyl-tRNA(Glu) + AMP + diphosphate. Functionally, catalyzes the attachment of glutamate to tRNA(Glu) in a two-step reaction: glutamate is first activated by ATP to form Glu-AMP and then transferred to the acceptor end of tRNA(Glu). The sequence is that of Glutamate--tRNA ligase from Paraburkholderia xenovorans (strain LB400).